The chain runs to 470 residues: Putative multidrug resistance protein MdtD (470 aa).

Topologically, residues Met1–Gln11 are periplasmic. Residues Leu12–Ala32 form a helical membrane-spanning segment. The Cytoplasmic portion of the chain corresponds to Leu33–His48. A helical membrane pass occupies residues Met49 to Ala69. The Periplasmic portion of the chain corresponds to Asp70 to Asn76. A helical transmembrane segment spans residues Ile77–Thr97. Topologically, residues Leu98 to Leu101 are cytoplasmic. The helical transmembrane segment at Val102–Met124 threads the bilayer. The Periplasmic segment spans residues Lys125–Thr137. A helical transmembrane segment spans residues Phe138–Val158. Over Glu159–His164 the chain is Cytoplasmic. A helical membrane pass occupies residues Trp165–Met185. Topologically, residues Pro186 to Asp196 are periplasmic. Residues Leu197–Ser217 traverse the membrane as a helical segment. Topologically, residues Lys218–Gly221 are cytoplasmic. The chain crosses the membrane as a helical span at residues Ile222–Leu242. The Periplasmic segment spans residues Leu243–Thr262. The chain crosses the membrane as a helical span at residues Phe263–Met283. Residues Thr284–Pro285 lie on the Cytoplasmic side of the membrane. Residues Val286–Met306 form a helical membrane-spanning segment. Residues Val307 to Ser341 lie on the Periplasmic side of the membrane. The helical transmembrane segment at Leu342–Leu362 threads the bilayer. The Cytoplasmic segment spans residues Gln363–Ser395. A helical transmembrane segment spans residues Met396 to Phe416. At Gly417–His430 the chain is on the periplasmic side. The chain crosses the membrane as a helical span at residues Val431–Ala451. Topologically, residues Arg452 to Leu470 are cytoplasmic.

The protein belongs to the major facilitator superfamily. TCR/Tet family.

The protein resides in the cell inner membrane. The polypeptide is Putative multidrug resistance protein MdtD (Salmonella heidelberg (strain SL476)).